Here is a 473-residue protein sequence, read N- to C-terminus: Photosystem II CP43 reaction center protein (473 aa).

Residues Met1 to Glu14 constitute a propeptide that is removed on maturation. An N-acetylthreonine modification is found at Thr15. Residue Thr15 is modified to Phosphothreonine. Helical transmembrane passes span Leu69–Ala93, Leu134–Asn155, Lys178–Thr200, Lys255–Ser275, and Trp291–Ala312. Glu367 lines the [CaMn4O5] cluster pocket. A helical transmembrane segment spans residues Arg447 to Pro471.

The protein belongs to the PsbB/PsbC family. PsbC subfamily. As to quaternary structure, PSII is composed of 1 copy each of membrane proteins PsbA, PsbB, PsbC, PsbD, PsbE, PsbF, PsbH, PsbI, PsbJ, PsbK, PsbL, PsbM, PsbT, PsbX, PsbY, PsbZ, Psb30/Ycf12, at least 3 peripheral proteins of the oxygen-evolving complex and a large number of cofactors. It forms dimeric complexes. Requires Binds multiple chlorophylls and provides some of the ligands for the Ca-4Mn-5O cluster of the oxygen-evolving complex. It may also provide a ligand for a Cl- that is required for oxygen evolution. PSII binds additional chlorophylls, carotenoids and specific lipids. as cofactor.

The protein localises to the plastid. The protein resides in the chloroplast thylakoid membrane. One of the components of the core complex of photosystem II (PSII). It binds chlorophyll and helps catalyze the primary light-induced photochemical processes of PSII. PSII is a light-driven water:plastoquinone oxidoreductase, using light energy to abstract electrons from H(2)O, generating O(2) and a proton gradient subsequently used for ATP formation. This chain is Photosystem II CP43 reaction center protein, found in Oryza nivara (Indian wild rice).